Here is a 623-residue protein sequence, read N- to C-terminus: Leucine aminopeptidase 2 (623 aa).

A peptide is bound by residues 136–138 (QCE) and 261–266 (PYGGME). H290 lines the Zn(2+) pocket. The active-site Proton acceptor is E291. Residues H294 and E313 each contribute to the Zn(2+) site. Y391 (proton donor) is an active-site residue.

This sequence belongs to the peptidase M1 family. Zn(2+) is required as a cofactor.

It is found in the cytoplasm. The protein localises to the nucleus. It carries out the reaction an epoxide + H2O = an ethanediol. In terms of biological role, aminopeptidase that preferentially cleaves di- and tripeptides. Also has low epoxide hydrolase activity (in vitro). Can hydrolyze the epoxide leukotriene LTA(4) but it forms preferentially 5,6-dihydroxy-7,9,11,14-eicosatetraenoic acid rather than the cytokine leukotriene B(4) as the product compared to the homologous mammalian enzyme (in vitro). This is Leucine aminopeptidase 2 (LKH1) from Candida albicans (strain SC5314 / ATCC MYA-2876) (Yeast).